Here is a 74-residue protein sequence, read N- to C-terminus: U2-sicaritoxin-Sdo1a (74 aa).

The N-terminal stretch at 1–20 is a signal peptide; sequence MKLSFCFFLCAIVLFSFAEA. A propeptide spanning residues 21–39 is cleaved from the precursor; the sequence is RINPNQLKRLRELVRDDEP. 3 disulfides stabilise this stretch: Cys-42–Cys-59, Cys-49–Cys-62, and Cys-58–Cys-71.

Expressed by the venom gland.

The protein localises to the secreted. The chain is U2-sicaritoxin-Sdo1a from Hexophthalma dolichocephala (Afrotropical spider).